We begin with the raw amino-acid sequence, 179 residues long: ADP-ribose 1''-phosphate phosphatase (179 aa).

A Macro domain is found at 1–179; that stretch reads MIKYIKGDLF…NLHINVYVVD (179 aa). Substrate is bound by residues 7–9, 26–28, 33–38, and 149–155; these read GDL, ACN, WGGGIA, and INAGLFA.

Belongs to the POA1 family.

The catalysed reaction is ADP-alpha-D-ribose 1''-phosphate + H2O = ADP-D-ribose + phosphate. Its function is as follows. Highly specific phosphatase involved in the metabolism of ADP-ribose 1''-phosphate (Appr1p) which is produced as a consequence of tRNA splicing. The chain is ADP-ribose 1''-phosphate phosphatase (POA1) from Debaryomyces hansenii (strain ATCC 36239 / CBS 767 / BCRC 21394 / JCM 1990 / NBRC 0083 / IGC 2968) (Yeast).